Consider the following 159-residue polypeptide: 6,7-dimethyl-8-ribityllumazine synthase (159 aa).

Residues W26, 58 to 60 (SFE), and 80 to 82 (VVI) contribute to the 5-amino-6-(D-ribitylamino)uracil site. 85 to 86 (GT) lines the (2S)-2-hydroxy-3-oxobutyl phosphate pocket. The active-site Proton donor is the H88. F113 is a binding site for 5-amino-6-(D-ribitylamino)uracil. R127 provides a ligand contact to (2S)-2-hydroxy-3-oxobutyl phosphate.

This sequence belongs to the DMRL synthase family.

It catalyses the reaction (2S)-2-hydroxy-3-oxobutyl phosphate + 5-amino-6-(D-ribitylamino)uracil = 6,7-dimethyl-8-(1-D-ribityl)lumazine + phosphate + 2 H2O + H(+). It functions in the pathway cofactor biosynthesis; riboflavin biosynthesis; riboflavin from 2-hydroxy-3-oxobutyl phosphate and 5-amino-6-(D-ribitylamino)uracil: step 1/2. In terms of biological role, catalyzes the formation of 6,7-dimethyl-8-ribityllumazine by condensation of 5-amino-6-(D-ribitylamino)uracil with 3,4-dihydroxy-2-butanone 4-phosphate. This is the penultimate step in the biosynthesis of riboflavin. This chain is 6,7-dimethyl-8-ribityllumazine synthase, found in Renibacterium salmoninarum (strain ATCC 33209 / DSM 20767 / JCM 11484 / NBRC 15589 / NCIMB 2235).